Here is a 145-residue protein sequence, read N- to C-terminus: SsrA-binding protein (145 aa).

It belongs to the SmpB family.

It is found in the cytoplasm. Required for rescue of stalled ribosomes mediated by trans-translation. Binds to transfer-messenger RNA (tmRNA), required for stable association of tmRNA with ribosomes. tmRNA and SmpB together mimic tRNA shape, replacing the anticodon stem-loop with SmpB. tmRNA is encoded by the ssrA gene; the 2 termini fold to resemble tRNA(Ala) and it encodes a 'tag peptide', a short internal open reading frame. During trans-translation Ala-aminoacylated tmRNA acts like a tRNA, entering the A-site of stalled ribosomes, displacing the stalled mRNA. The ribosome then switches to translate the ORF on the tmRNA; the nascent peptide is terminated with the 'tag peptide' encoded by the tmRNA and targeted for degradation. The ribosome is freed to recommence translation, which seems to be the essential function of trans-translation. This Mycoplasmopsis pulmonis (strain UAB CTIP) (Mycoplasma pulmonis) protein is SsrA-binding protein.